The primary structure comprises 97 residues: Large ribosomal subunit protein bL28 (97 aa).

It belongs to the bacterial ribosomal protein bL28 family.

This is Large ribosomal subunit protein bL28 from Rhizorhabdus wittichii (strain DSM 6014 / CCUG 31198 / JCM 15750 / NBRC 105917 / EY 4224 / RW1) (Sphingomonas wittichii).